The following is a 251-amino-acid chain: Alanyl-tRNA editing protein AlaX-M (251 aa).

Residues His107, His111, Cys210, and His214 each coordinate Zn(2+).

It belongs to the class-II aminoacyl-tRNA synthetase family. Editing domain AlaX-M subfamily. The cofactor is Zn(2+).

The protein resides in the cytoplasm. Functions in trans to edit the amino acid moiety from mischarged Ser-tRNA(Ala). Recognition depends, at least in part, on the acceptor stem of tRNA(Ala). In Methanosarcina mazei (strain ATCC BAA-159 / DSM 3647 / Goe1 / Go1 / JCM 11833 / OCM 88) (Methanosarcina frisia), this protein is Alanyl-tRNA editing protein AlaX-M (alaXM).